Consider the following 394-residue polypeptide: Elongation factor Tu (394 aa).

Residues 10–204 (KPHVNVGTIG…HLDTYIPEPE (195 aa)) enclose the tr-type G domain. Positions 19–26 (GHVDHGKT) are G1. 19–26 (GHVDHGKT) serves as a coordination point for GTP. T26 is a binding site for Mg(2+). The G2 stretch occupies residues 60-64 (GITIN). Residues 81–84 (DCPG) are G3. Residues 81–85 (DCPGH) and 136–139 (NKCD) each bind GTP. Residues 136–139 (NKCD) are G4. The tract at residues 174–176 (SAL) is G5.

Belongs to the TRAFAC class translation factor GTPase superfamily. Classic translation factor GTPase family. EF-Tu/EF-1A subfamily. Monomer.

The protein resides in the cytoplasm. It catalyses the reaction GTP + H2O = GDP + phosphate + H(+). Functionally, GTP hydrolase that promotes the GTP-dependent binding of aminoacyl-tRNA to the A-site of ribosomes during protein biosynthesis. This is Elongation factor Tu from Aeromonas salmonicida (strain A449).